A 132-amino-acid chain; its full sequence is Fluoride-specific ion channel FluC 2 (132 aa).

4 consecutive transmembrane segments (helical) span residues 5 to 25, 34 to 54, 59 to 79, and 95 to 115; these read VAVF…NLLG, TFIE…FFAA, PLVQ…MSAF, and VLYL…GIVI. Residues Gly71 and Thr74 each contribute to the Na(+) site.

The protein belongs to the fluoride channel Fluc/FEX (TC 1.A.43) family.

It localises to the cell membrane. The catalysed reaction is fluoride(in) = fluoride(out). Its activity is regulated as follows. Na(+) is not transported, but it plays an essential structural role and its presence is essential for fluoride channel function. In terms of biological role, fluoride-specific ion channel. Important for reducing fluoride concentration in the cell, thus reducing its toxicity. The protein is Fluoride-specific ion channel FluC 2 of Bacillus licheniformis (strain ATCC 14580 / DSM 13 / JCM 2505 / CCUG 7422 / NBRC 12200 / NCIMB 9375 / NCTC 10341 / NRRL NRS-1264 / Gibson 46).